The primary structure comprises 243 residues: Probable transcriptional regulator ycf27 (243 aa).

Positions 7–120 (KILVVDDEAS…ELEARIRSVL (114 aa)) constitute a Response regulatory domain. A 4-aspartylphosphate modification is found at D56. Residues 76–94 (DVPIIMLTALGEVCDRITG) constitute a DNA-binding region (H-T-H motif). The segment at residues 135–236 (SGIISIGFLK…ARGTGYLFQR (102 aa)) is a DNA-binding region (ompR/PhoB-type).

The protein localises to the plastid. It is found in the chloroplast. Functionally, probable promoter-specific protein mediating the interaction between DNA and RNA polymerase. The sequence is that of Probable transcriptional regulator ycf27 (ycf27) from Pyropia yezoensis (Susabi-nori).